The following is a 263-amino-acid chain: GTP cyclohydrolase 1 type 2 homolog (263 aa).

A divalent metal cation contacts are provided by H76, H77, D113, H231, and E235.

The protein belongs to the GTP cyclohydrolase I type 2/NIF3 family. Homohexamer.

In Deinococcus radiodurans (strain ATCC 13939 / DSM 20539 / JCM 16871 / CCUG 27074 / LMG 4051 / NBRC 15346 / NCIMB 9279 / VKM B-1422 / R1), this protein is GTP cyclohydrolase 1 type 2 homolog.